A 287-amino-acid polypeptide reads, in one-letter code: Nucleotide-binding protein Pmob_0154 (287 aa).

15 to 22 (GLSGAGKT) contributes to the ATP binding site. A GTP-binding site is contributed by 64–67 (DIRW).

It belongs to the RapZ-like family.

In terms of biological role, displays ATPase and GTPase activities. The sequence is that of Nucleotide-binding protein Pmob_0154 from Petrotoga mobilis (strain DSM 10674 / SJ95).